The sequence spans 937 residues: ABC transporter A family member 4 (937 aa).

7 helical membrane-spanning segments follow: residues 34 to 54 (LIVI…LFDT), 340 to 360 (IASV…FPVI), 394 to 414 (FLAI…AIGL), 423 to 443 (SIQF…AFLV), 455 to 475 (VAAY…FQFM), 478 to 498 (GLSF…FSLY), and 528 to 548 (AMDE…IAAY). The 235-residue stretch at 618-852 (DKLKKVYPGR…YGGSYVLTMT (235 aa)) folds into the ABC transporter domain. Residue 653-660 (GPNGAGKT) coordinates ATP.

This sequence belongs to the ABC transporter superfamily. ABCA family. CPR flippase (TC 3.A.1.211) subfamily.

Its subcellular location is the membrane. The polypeptide is ABC transporter A family member 4 (ABCA4) (Arabidopsis thaliana (Mouse-ear cress)).